A 217-amino-acid chain; its full sequence is tRNA (guanine-N(7)-)-methyltransferase (217 aa).

The S-adenosyl-L-methionine site is built by Glu44, Asp69, Asp96, and Asp118. Asp118 is a catalytic residue. Lys122 contributes to the substrate binding site. Residues 124-129 are interaction with RNA; that stretch reads RHEKRR. Substrate contacts are provided by residues Asp154 and 193 to 196; that span reads TEYE.

The protein belongs to the class I-like SAM-binding methyltransferase superfamily. TrmB family.

The enzyme catalyses guanosine(46) in tRNA + S-adenosyl-L-methionine = N(7)-methylguanosine(46) in tRNA + S-adenosyl-L-homocysteine. The protein operates within tRNA modification; N(7)-methylguanine-tRNA biosynthesis. In terms of biological role, catalyzes the formation of N(7)-methylguanine at position 46 (m7G46) in tRNA. The protein is tRNA (guanine-N(7)-)-methyltransferase of Lactococcus lactis subsp. cremoris (strain SK11).